The primary structure comprises 154 residues: UPF0178 protein in pahZ1 5'region (154 aa).

This sequence belongs to the UPF0178 family.

The sequence is that of UPF0178 protein in pahZ1 5'region from Paucimonas lemoignei (Pseudomonas lemoignei).